The sequence spans 172 residues: MMSNYLSQLISQHKDFPKKGIVFKDVLPLLQHPNELEGLIQGMSTGQIFESSDAIVSIDARGFIFGTAISMKLSKPMIVARKPGKLPGELITHSYELEYGQNSLSIQKKAIENYQSFVIVDDLLATGGTAMCVSEMLKEAGKDITGLSVVVELGQLNARAYLPFPVESQIIF.

Belongs to the purine/pyrimidine phosphoribosyltransferase family. As to quaternary structure, homodimer.

It localises to the cytoplasm. It catalyses the reaction AMP + diphosphate = 5-phospho-alpha-D-ribose 1-diphosphate + adenine. It participates in purine metabolism; AMP biosynthesis via salvage pathway; AMP from adenine: step 1/1. Functionally, catalyzes a salvage reaction resulting in the formation of AMP, that is energically less costly than de novo synthesis. In Prochlorococcus marinus (strain MIT 9211), this protein is Adenine phosphoribosyltransferase.